The primary structure comprises 439 residues: GTPase Der (439 aa).

EngA-type G domains are found at residues 4–168 and 177–352; these read PIVA…KDDE and INIA…DNYT. Residues 10–17, 57–61, 120–123, 183–190, 230–234, and 295–298 contribute to the GTP site; these read GRPNVGKS, DTGGI, NKID, GKPNVGKS, DTAGL, and NKWD. One can recognise a KH-like domain in the interval 353–437; it reads KRVKTGVLND…GIKLEFRERK (85 aa).

This sequence belongs to the TRAFAC class TrmE-Era-EngA-EngB-Septin-like GTPase superfamily. EngA (Der) GTPase family. In terms of assembly, associates with the 50S ribosomal subunit.

In terms of biological role, GTPase that plays an essential role in the late steps of ribosome biogenesis. This is GTPase Der from Clostridium botulinum (strain Okra / Type B1).